Reading from the N-terminus, the 308-residue chain is ATP synthase gamma chain (308 aa).

Belongs to the ATPase gamma chain family. F-type ATPases have 2 components, CF(1) - the catalytic core - and CF(0) - the membrane proton channel. CF(1) has five subunits: alpha(3), beta(3), gamma(1), delta(1), epsilon(1). CF(0) has three main subunits: a, b and c.

Its subcellular location is the cell membrane. Its function is as follows. Produces ATP from ADP in the presence of a proton gradient across the membrane. The gamma chain is believed to be important in regulating ATPase activity and the flow of protons through the CF(0) complex. The polypeptide is ATP synthase gamma chain (Lacticaseibacillus casei (strain BL23) (Lactobacillus casei)).